A 231-amino-acid polypeptide reads, in one-letter code: Large ribosomal subunit protein uL1 (231 aa).

Belongs to the universal ribosomal protein uL1 family. In terms of assembly, part of the 50S ribosomal subunit.

Functionally, binds directly to 23S rRNA. The L1 stalk is quite mobile in the ribosome, and is involved in E site tRNA release. Protein L1 is also a translational repressor protein, it controls the translation of the L11 operon by binding to its mRNA. The polypeptide is Large ribosomal subunit protein uL1 (Buchnera aphidicola subsp. Acyrthosiphon pisum (strain APS) (Acyrthosiphon pisum symbiotic bacterium)).